Reading from the N-terminus, the 415-residue chain is Serine hydroxymethyltransferase (415 aa).

(6S)-5,6,7,8-tetrahydrofolate is bound by residues leucine 122 and 126–128; that span reads GHL. Lysine 230 carries the post-translational modification N6-(pyridoxal phosphate)lysine.

It belongs to the SHMT family. As to quaternary structure, homodimer. Pyridoxal 5'-phosphate is required as a cofactor.

The protein localises to the cytoplasm. It carries out the reaction (6R)-5,10-methylene-5,6,7,8-tetrahydrofolate + glycine + H2O = (6S)-5,6,7,8-tetrahydrofolate + L-serine. Its pathway is one-carbon metabolism; tetrahydrofolate interconversion. The protein operates within amino-acid biosynthesis; glycine biosynthesis; glycine from L-serine: step 1/1. Catalyzes the reversible interconversion of serine and glycine with tetrahydrofolate (THF) serving as the one-carbon carrier. This reaction serves as the major source of one-carbon groups required for the biosynthesis of purines, thymidylate, methionine, and other important biomolecules. Also exhibits THF-independent aldolase activity toward beta-hydroxyamino acids, producing glycine and aldehydes, via a retro-aldol mechanism. The polypeptide is Serine hydroxymethyltransferase (Ralstonia pickettii (strain 12J)).